Reading from the N-terminus, the 252-residue chain is Triosephosphate isomerase (252 aa).

Residue 10–12 (NWK) coordinates substrate. The active-site Electrophile is the H96. The Proton acceptor role is filled by E168. Substrate-binding positions include G174, S214, and 235-236 (GG).

Belongs to the triosephosphate isomerase family. In terms of assembly, homodimer.

The protein localises to the cytoplasm. It catalyses the reaction D-glyceraldehyde 3-phosphate = dihydroxyacetone phosphate. It functions in the pathway carbohydrate biosynthesis; gluconeogenesis. Its pathway is carbohydrate degradation; glycolysis; D-glyceraldehyde 3-phosphate from glycerone phosphate: step 1/1. Its function is as follows. Involved in the gluconeogenesis. Catalyzes stereospecifically the conversion of dihydroxyacetone phosphate (DHAP) to D-glyceraldehyde-3-phosphate (G3P). In Streptococcus thermophilus (strain CNRZ 1066), this protein is Triosephosphate isomerase.